The chain runs to 115 residues: Replication initiation control protein YabA (115 aa).

Zn(2+) contacts are provided by histidine 86, cysteine 88, cysteine 102, and cysteine 105.

Belongs to the YabA family. As to quaternary structure, homotetramer. Interacts with both DnaA and DnaN, acting as a bridge between these two proteins. It depends on Zn(2+) as a cofactor.

It localises to the cytoplasm. Its subcellular location is the nucleoid. Functionally, involved in control of chromosome replication initiation. Inhibits the cooperative binding of DnaA to the oriC region, thus negatively regulating initiation of chromosome replication. Inhibits the ability of DnaA-ATP to form a helix on DNA; does not disassemble preformed DnaA-DNA helices. Decreases the residence time of DnaA on the chromosome at its binding sites (oriC, replication forks and promoter-binding sites). Tethers DnaA to the replication machinery via the DNA polymerase beta sliding clamp subunit (dnaN). Associates with oriC and other DnaA targets on the chromosome in a DnaA-dependent manner. The sequence is that of Replication initiation control protein YabA from Enterococcus faecalis (strain ATCC 700802 / V583).